A 459-amino-acid chain; its full sequence is Phosphoglucosamine mutase (459 aa).

The Phosphoserine intermediate role is filled by S105. 4 residues coordinate Mg(2+): S105, D252, D254, and D256. S105 carries the post-translational modification Phosphoserine.

This sequence belongs to the phosphohexose mutase family. It depends on Mg(2+) as a cofactor. Activated by phosphorylation.

It carries out the reaction alpha-D-glucosamine 1-phosphate = D-glucosamine 6-phosphate. In terms of biological role, catalyzes the conversion of glucosamine-6-phosphate to glucosamine-1-phosphate. The sequence is that of Phosphoglucosamine mutase from Bifidobacterium adolescentis (strain ATCC 15703 / DSM 20083 / NCTC 11814 / E194a).